The sequence spans 701 residues: Potassium-transporting ATPase ATP-binding subunit (701 aa).

Residues 1 to 28 (MNPDAPTPKNKSSRSRPSDRPQARKKAK) are disordered. 4 helical membrane-spanning segments follow: residues 57 to 77 (MFLVWVGTIITLSVTIEPNLF), 90 to 110 (GILTGILFFTVWFANFAEAVA), 245 to 265 (VLLAVLSLVFLFVVATLPVFA), and 276 to 296 (ILVALLVALIPTTIGGLLSAI). Aspartate 329 serves as the catalytic 4-aspartylphosphate intermediate. ATP is bound by residues aspartate 366, glutamate 370, 397 to 404 (FSAKTRMS), and lysine 416. Residues aspartate 539 and aspartate 543 each coordinate Mg(2+). Transmembrane regions (helical) follow at residues 599–619 (FSLANDIAKYFAIIPVIFASA), 635–655 (AVLSALIYNALIIPALIPLAL), and 681–701 (VIAPFIAIKLIDVLITLVGLA).

It belongs to the cation transport ATPase (P-type) (TC 3.A.3) family. Type IA subfamily. As to quaternary structure, the system is composed of three essential subunits: KdpA, KdpB and KdpC.

The protein localises to the cell membrane. The enzyme catalyses K(+)(out) + ATP + H2O = K(+)(in) + ADP + phosphate + H(+). Its function is as follows. Part of the high-affinity ATP-driven potassium transport (or Kdp) system, which catalyzes the hydrolysis of ATP coupled with the electrogenic transport of potassium into the cytoplasm. This subunit is responsible for energy coupling to the transport system and for the release of the potassium ions to the cytoplasm. The polypeptide is Potassium-transporting ATPase ATP-binding subunit (Anabaena sp. (strain L31)).